Consider the following 377-residue polypeptide: Succinyl-diaminopimelate desuccinylase (377 aa).

Zn(2+) is bound at residue His67. Asp69 is an active-site residue. Position 100 (Asp100) interacts with Zn(2+). Glu134 (proton acceptor) is an active-site residue. The Zn(2+) site is built by Glu135, Glu163, and His349.

The protein belongs to the peptidase M20A family. DapE subfamily. Homodimer. Zn(2+) is required as a cofactor. The cofactor is Co(2+).

It carries out the reaction N-succinyl-(2S,6S)-2,6-diaminopimelate + H2O = (2S,6S)-2,6-diaminopimelate + succinate. The protein operates within amino-acid biosynthesis; L-lysine biosynthesis via DAP pathway; LL-2,6-diaminopimelate from (S)-tetrahydrodipicolinate (succinylase route): step 3/3. Functionally, catalyzes the hydrolysis of N-succinyl-L,L-diaminopimelic acid (SDAP), forming succinate and LL-2,6-diaminopimelate (DAP), an intermediate involved in the bacterial biosynthesis of lysine and meso-diaminopimelic acid, an essential component of bacterial cell walls. The sequence is that of Succinyl-diaminopimelate desuccinylase from Haemophilus influenzae (strain PittEE).